Consider the following 721-residue polypeptide: Vacuolar transporter chaperone complex subunit 4 (721 aa).

One can recognise an SPX domain in the interval 1-146 (MKFGQLLKET…GWILKPVFAA (146 aa)). Topologically, residues 1 to 631 (MKFGQLLKET…KTYFALERTY (631 aa)) are cytoplasmic. ATP is bound by residues Lys-198, Arg-262, Arg-264, Lys-279, Lys-292, Tyr-357, and Arg-359. Glu-421 provides a ligand contact to Mn(2+). Lys-453 is a catalytic residue. Polar residues-rich tracts occupy residues 490 to 513 (QGRS…SENT) and 529 to 547 (IGSS…SDSF). The disordered stretch occupies residues 490 to 547 (QGRSQSGTHSSSVSANVLTDSENTPIHADGDNYVDEESRIGSSSTRNDNSTFQTSDSF). The residue at position 495 (Ser-495) is a Phosphoserine. Thr-497 is subject to Phosphothreonine. At Ser-501 the chain carries Phosphoserine. Residue Thr-534 is modified to Phosphothreonine. Ser-546 carries the post-translational modification Phosphoserine. A helical transmembrane segment spans residues 632–652 (LDYLRYSILMGSIGITLFSFA). Topologically, residues 653 to 657 (KTRSG) are vacuolar. A helical membrane pass occupies residues 658–678 (ILGAASFTLVALFAIFYSTFL). The Cytoplasmic portion of the chain corresponds to 679 to 697 (YLWRAVNIAKHNAVRYDDR). Residues 698-718 (FGPTAICVITFAAISANVILN) form a helical membrane-spanning segment. Residues 719-721 (FNA) are Vacuolar-facing.

Belongs to the VTC4 family. As to quaternary structure, the VTC core complex is an integral membrane heterooligomer composed of at least the catalytic subunit vtc4 and the accessory subunits vtc1 and vtc2. vtc1 is a small membrane protein without hydrophilic domain. Vtc2 and vtc4 are related and have 2 hydrophilic domains that face the cytosol, an N-terminal SPX domain and the central core domain. The central core in vtc4 is the catalytic domain. Requires Mn(2+) as cofactor.

The protein resides in the vacuole membrane. The enzyme catalyses [phosphate](n) + ATP = [phosphate](n+1) + ADP. With respect to regulation, activity of the enzyme is Mn(2+)-dependent and enhanced in the presence of pyrophosphate (PPi). Its function is as follows. Catalytic subunit of the vacuolar transporter chaperone (VTC) complex. The VTC complex acts as a vacuolar polyphosphate polymerase that catalyzes the synthesis of inorganic polyphosphate (polyP) via transfer of phosphate from ATP to a growing polyP chain, releasing ADP. VTC exposes its catalytic domain vtc4 to the cytosol, where the growing polyP chain winds through a tunnel-shaped pocket, integrating cytoplasmic polymer synthesis with polyP membrane translocation. The VTC complex carries 9 vacuolar transmembrane domains, which are likely to constitute the translocation channel into the organelle lumen. PolyP synthesis is tightly coupled to its transport into the vacuole lumen, in order to avoid otherwise toxic intermediates in the cytosol, and it depends on the proton gradient across the membrane, formed by V-ATPase. The VTC complex also plays a role in vacuolar membrane fusion. The chain is Vacuolar transporter chaperone complex subunit 4 (vtc4) from Schizosaccharomyces pombe (strain 972 / ATCC 24843) (Fission yeast).